The sequence spans 567 residues: UPF0313 protein CTN_0332 (567 aa).

The Radical SAM core domain maps to 288–560; the sequence is KAIETVKFSI…NKMKENVLFK (273 aa). Residues cysteine 303, cysteine 307, and cysteine 310 each coordinate [4Fe-4S] cluster.

Belongs to the UPF0313 family. [4Fe-4S] cluster is required as a cofactor.

This chain is UPF0313 protein CTN_0332, found in Thermotoga neapolitana (strain ATCC 49049 / DSM 4359 / NBRC 107923 / NS-E).